The sequence spans 53 residues: Metallothionein (53 aa).

Positions 1–6 (MRVIRM) are excised as a propeptide. Cu(+) contacts are provided by Cys17, His19, Cys22, Cys24, Cys32, His33, Cys34, Cys43, and Cys45.

Belongs to the metallothionein superfamily.

Metallothioneins are small proteins that have a high content of cysteine residues which allow them to bind heavy metal ions through clusters of thiolate bonds. MymT binds up to seven ions of Cu(+), with a preference for four to six Cu(+) ions, in a solvent-shielded core. MymT protects M.tuberculosis from copper toxicity. The polypeptide is Metallothionein (mymT) (Mycobacterium tuberculosis (strain CDC 1551 / Oshkosh)).